We begin with the raw amino-acid sequence, 181 residues long: MTGIKRPMSQYQDDNEWEDWGPSKSQLKRDAEALQKMGEEIVSLSHSELEKIPLDEELAEAVELGRKLKPKKDESFRRHLQFIGRLMRSRDVEPIVEALSIIKNRHSTVNARLHRLEQWRERLINEGDSALNELMSQFHELDRQKLRQLIRTANKERELNKPPVAYREMYQYLRGEIEDLL.

Residues 1–24 (MTGIKRPMSQYQDDNEWEDWGPSK) form a disordered region.

The protein belongs to the DarP family.

It localises to the cytoplasm. Its function is as follows. Member of a network of 50S ribosomal subunit biogenesis factors which assembles along the 30S-50S interface, preventing incorrect 23S rRNA structures from forming. Promotes peptidyl transferase center (PTC) maturation. This chain is Dual-action ribosomal maturation protein DarP, found in Aeromonas hydrophila subsp. hydrophila (strain ATCC 7966 / DSM 30187 / BCRC 13018 / CCUG 14551 / JCM 1027 / KCTC 2358 / NCIMB 9240 / NCTC 8049).